The sequence spans 439 residues: Glucose-1-phosphate adenylyltransferase (439 aa).

Alpha-D-glucose 1-phosphate is bound by residues G172, 187–188, and S219; that span reads EK.

It belongs to the bacterial/plant glucose-1-phosphate adenylyltransferase family. In terms of assembly, homotetramer.

The catalysed reaction is alpha-D-glucose 1-phosphate + ATP + H(+) = ADP-alpha-D-glucose + diphosphate. It functions in the pathway glycan biosynthesis; glycogen biosynthesis. Involved in the biosynthesis of ADP-glucose, a building block required for the elongation reactions to produce glycogen. Catalyzes the reaction between ATP and alpha-D-glucose 1-phosphate (G1P) to produce pyrophosphate and ADP-Glc. This is Glucose-1-phosphate adenylyltransferase from Synechocystis sp. (strain ATCC 27184 / PCC 6803 / Kazusa).